Consider the following 109-residue polypeptide: Nucleoid-associated protein CC_0268 (109 aa).

The protein belongs to the YbaB/EbfC family. As to quaternary structure, homodimer.

It is found in the cytoplasm. The protein localises to the nucleoid. Its function is as follows. Binds to DNA and alters its conformation. May be involved in regulation of gene expression, nucleoid organization and DNA protection. This is Nucleoid-associated protein CC_0268 from Caulobacter vibrioides (strain ATCC 19089 / CIP 103742 / CB 15) (Caulobacter crescentus).